The following is an 84-amino-acid chain: U8-theraphotoxin-Hhn1d (84 aa).

The N-terminal stretch at 1-21 (MKVVLIVCLVWVMAMMELVSC) is a signal peptide. 5 disulfide bridges follow: cysteine 23–cysteine 35, cysteine 29–cysteine 44, cysteine 34–cysteine 67, cysteine 54–cysteine 75, and cysteine 69–cysteine 81.

The protein belongs to the AVIT (prokineticin) family. In terms of tissue distribution, expressed by the venom gland.

The protein resides in the secreted. This Cyriopagopus hainanus (Chinese bird spider) protein is U8-theraphotoxin-Hhn1d.